The chain runs to 540 residues: Keratin, type II cytoskeletal 73 (540 aa).

The segment at 1–131 (MSRQFTYKSG…DPEIQKVCAQ (131 aa)) is head. The interval 132–167 (EREQIKALNNKFASFIDKVRFLEQQNQVLGTKWELL) is coil 1A. The 314-residue stretch at 132–445 (EREQIKALNN…KLLEGEECRM (314 aa)) folds into the IF rod domain. The segment at 168-186 (QQQDLDNCKNNLEPILEGY) is linker 1. A coil 1B region spans residues 187 to 278 (ISNLRKQLEM…CLYEGEIAQM (92 aa)). The segment at 279 to 302 (QSHISDTSVILSMDNNRNLDLNSI) is linker 12. The tract at residues 303 to 441 (IAEVRAQYED…ATYRKLLEGE (139 aa)) is coil 2. Residues 442-540 (ECRMSGEYTN…LSSPTKKTPR (99 aa)) form a tail region. Positions 509-540 (GEAKTRLGSTSEIKDLLGKTPALSSPTKKTPR) are disordered. A compositionally biased stretch (polar residues) spans 530–540 (ALSSPTKKTPR).

The protein belongs to the intermediate filament family. As to quaternary structure, heterotetramer of two type I and two type II keratins.

Functionally, has a role in hair formation. Specific component of keratin intermediate filaments in the inner root sheath (IRS) of the hair follicle. The chain is Keratin, type II cytoskeletal 73 (KRT73) from Bos taurus (Bovine).